A 124-amino-acid polypeptide reads, in one-letter code: Large ribosomal subunit protein uL22c (124 aa).

This sequence belongs to the universal ribosomal protein uL22 family. Part of the 50S ribosomal subunit.

It localises to the plastid. The protein localises to the chloroplast. Functionally, this protein binds specifically to 23S rRNA. Its function is as follows. The globular domain of the protein is located near the polypeptide exit tunnel on the outside of the subunit, while an extended beta-hairpin is found that lines the wall of the exit tunnel in the center of the 70S ribosome. This is Large ribosomal subunit protein uL22c (rpl22) from Amborella trichopoda.